The following is a 197-amino-acid chain: Imidazoleglycerol-phosphate dehydratase (197 aa).

Belongs to the imidazoleglycerol-phosphate dehydratase family.

It localises to the cytoplasm. The catalysed reaction is D-erythro-1-(imidazol-4-yl)glycerol 3-phosphate = 3-(imidazol-4-yl)-2-oxopropyl phosphate + H2O. It functions in the pathway amino-acid biosynthesis; L-histidine biosynthesis; L-histidine from 5-phospho-alpha-D-ribose 1-diphosphate: step 6/9. The chain is Imidazoleglycerol-phosphate dehydratase from Hahella chejuensis (strain KCTC 2396).